A 44-amino-acid chain; its full sequence is Cytochrome b559 subunit beta (44 aa).

The chain crosses the membrane as a helical span at residues Trp-19–Ala-35. His-23 contributes to the heme binding site.

It belongs to the PsbE/PsbF family. In terms of assembly, heterodimer of an alpha subunit and a beta subunit. PSII is composed of 1 copy each of membrane proteins PsbA, PsbB, PsbC, PsbD, PsbE, PsbF, PsbH, PsbI, PsbJ, PsbK, PsbL, PsbM, PsbT, PsbX, PsbY, PsbZ, Psb30/Ycf12, peripheral proteins PsbO, CyanoQ (PsbQ), PsbU, PsbV and a large number of cofactors. It forms dimeric complexes. Heme b is required as a cofactor.

The protein resides in the cellular thylakoid membrane. This b-type cytochrome is tightly associated with the reaction center of photosystem II (PSII). PSII is a light-driven water:plastoquinone oxidoreductase that uses light energy to abstract electrons from H(2)O, generating O(2) and a proton gradient subsequently used for ATP formation. It consists of a core antenna complex that captures photons, and an electron transfer chain that converts photonic excitation into a charge separation. The protein is Cytochrome b559 subunit beta of Synechococcus elongatus (strain ATCC 33912 / PCC 7942 / FACHB-805) (Anacystis nidulans R2).